The following is a 307-amino-acid chain: Chlorophyll a-b binding protein 1, chloroplastic (307 aa).

The transit peptide at 1-44 directs the protein to the chloroplast; sequence MAPYSVVASVLAAAPPQQSGSVRQLPSTINRAITQRSQSRHVAS. The tract at residues 34–54 is disordered; it reads TQRSQSRHVASASSASSPTTM. Chlorophyll a-binding residues include Thr52, Glu63, Ile64, Gly65, Tyr68, Leu81, Pro86, Arg89, Gly90, Phe91, and Asp92. A loroxanthin-binding site is contributed by Leu96. Residues 111 to 143 traverse the membrane as a helical segment; the sequence is NYDESRLRWLLEGELYNGRLAMLAVVGVLTVEA. Residues Leu120, Glu124, Asn127, Met132, and Lys146 each contribute to the chlorophyll a site. Trp149 contributes to the loroxanthin binding site. Chlorophyll a contacts are provided by Glu151, Tyr163, His171, Glu178, Arg181, Glu190, Arg198, and Asp200. A helical transmembrane segment spans residues 161 to 186; the sequence is TPYVVAVVGGHLAFALLEKKRLENFR. Asp200 and Leu202 together coordinate all-trans-violaxanthin. Chlorophyll a contacts are provided by Leu204, Asn208, Tyr214, Asn215, Ala218, Asn222, and Arg224. The helical transmembrane segment at 213-238 threads the bilayer; sequence DYNRQAEVRNCRLAMLTFLGFSVQAW. Phe230 lines the loroxanthin pocket. Phe233 provides a ligand contact to all-trans-violaxanthin. Gln236 serves as a coordination point for chlorophyll a. Residue Pro244 participates in all-trans-violaxanthin binding. The chlorophyll a site is built by Asn247, His251, Pro255, Phe256, Ala258, Asn259, Ile260, and Phe274. Residues 265-289 form a helical membrane-spanning segment; the sequence is DRGTNVVAIFSAFAAVMHIAELARE.

This sequence belongs to the light-harvesting chlorophyll a/b-binding (LHC) protein family. Homooligomer. Component of a light-harvesting complex (LHC) consisting of 11 chlorophyll a-b binding proteins. Binds 11 chlorophylls (Chl-a and Chl-b) and the 2 carotenoids violaxanthin and loroxanthin. is required as a cofactor.

The protein localises to the plastid. It is found in the chloroplast thylakoid membrane. Functionally, component of a light-harvesting complex (LHC). The LHC functions as a light receptor, it captures and delivers excitation energy to photosystems with which it is closely associated. Functions in a far-red LHC by absorbing far-red light and promoting photosystem II (PSII) excitation, likely with entropy-driven uphill excitation energy transfer. Exhibits a typical absorption band at 671 nm (Qy band), as well as a large far-red absorption band at 706.5 together with fluorescence emission at around 713 nm (F713). The polypeptide is Chlorophyll a-b binding protein 1, chloroplastic (Prasiola crispa (Green alga)).